A 128-amino-acid chain; its full sequence is Adrenodoxin homolog (128 aa).

Residues 12–115 (EQIRIFFKTM…NAVFTVPRAT (104 aa)) enclose the 2Fe-2S ferredoxin-type domain. [2Fe-2S] cluster contacts are provided by Cys-50, Cys-56, Cys-59, and Cys-96.

Belongs to the adrenodoxin/putidaredoxin family. Requires [2Fe-2S] cluster as cofactor.

The protein localises to the mitosome. Functionally, ferredoxins are iron-sulfur proteins that transfer electrons in a wide variety of metabolic reactions. This is Adrenodoxin homolog from Encephalitozoon cuniculi (strain GB-M1) (Microsporidian parasite).